We begin with the raw amino-acid sequence, 130 residues long: Glycine cleavage system H protein (130 aa).

The Lipoyl-binding domain maps to 25–106 (TALIGISDFA…PFDSWMIKVK (82 aa)). Residue Lys-66 is modified to N6-lipoyllysine.

It belongs to the GcvH family. The glycine cleavage system is composed of four proteins: P, T, L and H. (R)-lipoate serves as cofactor.

The glycine cleavage system catalyzes the degradation of glycine. The H protein shuttles the methylamine group of glycine from the P protein to the T protein. This chain is Glycine cleavage system H protein, found in Leptospira borgpetersenii serovar Hardjo-bovis (strain JB197).